A 115-amino-acid chain; its full sequence is Promotilin (115 aa).

The signal sequence occupies residues 1 to 25 (MVSRKAVAALLVVHVAAMLASQTEA). The segment at 39–72 (QEKERNKGQKKSLSVWQRSGEEGPVDPAEPIREE) is disordered.

It belongs to the motilin family.

The protein localises to the secreted. Functionally, plays an important role in the regulation of interdigestive gastrointestinal motility and indirectly causes rhythmic contraction of duodenal and colonic smooth muscle. This is Promotilin (MLN) from Homo sapiens (Human).